The sequence spans 279 residues: DegV domain-containing protein lmo1863 (279 aa).

The region spanning 4-278 is the DegV domain; sequence IKIITDSTAG…TGAFAFMYYT (275 aa). Residues Ser-62 and Ser-94 each contribute to the hexadecanoate site.

May bind long-chain fatty acids, such as palmitate, and may play a role in lipid transport or fatty acid metabolism. The protein is DegV domain-containing protein lmo1863 of Listeria monocytogenes serovar 1/2a (strain ATCC BAA-679 / EGD-e).